A 100-amino-acid polypeptide reads, in one-letter code: Small ribosomal subunit protein uS14c (100 aa).

A compositionally biased stretch (basic and acidic residues) spans 1 to 10 (MARKGLIERE). Residues 1-29 (MARKGLIEREKKRKKLEQKYHSIRGSSKK) are disordered.

It belongs to the universal ribosomal protein uS14 family. In terms of assembly, part of the 30S ribosomal subunit.

It localises to the plastid. It is found in the chloroplast. In terms of biological role, binds 16S rRNA, required for the assembly of 30S particles. This is Small ribosomal subunit protein uS14c from Acorus calamus (Sweet flag).